The sequence spans 103 residues: Probable pterin-4-alpha-carbinolamine dehydratase (103 aa).

This sequence belongs to the pterin-4-alpha-carbinolamine dehydratase family.

It catalyses the reaction (4aS,6R)-4a-hydroxy-L-erythro-5,6,7,8-tetrahydrobiopterin = (6R)-L-erythro-6,7-dihydrobiopterin + H2O. Its function is as follows. Involved in tetrahydrobiopterin biosynthesis. The polypeptide is Probable pterin-4-alpha-carbinolamine dehydratase (Pcd) (Hypsibius exemplaris (Freshwater tardigrade)).